A 237-amino-acid chain; its full sequence is MGRAHEVRAASMAKTAAKKSAANGRASKEIYMAAKAGGSDPSSNLALRALIDKAKSNQIPKEVIDRAIKRATGGDAENYVSNRYEGMGPGNTAIIVDALTSNVNRAAANIREVFNKNHGNPEGKVAFMFEEVSMFAFKGKTEEEVLEQLMMSEVDVNDVEVEEDMIIVTAPYKSFNAVKHSLDELGIEEYLMSEIKLIPIDDYIEVSDAELKQQLQTLLDKLDELEDVQNVYHNATI.

The disordered stretch occupies residues 1–20 (MGRAHEVRAASMAKTAAKKS). The segment covering 9–20 (AASMAKTAAKKS) has biased composition (low complexity).

It belongs to the TACO1 family.

It is found in the cytoplasm. This is Probable transcriptional regulatory protein Mfl546 from Mesoplasma florum (strain ATCC 33453 / NBRC 100688 / NCTC 11704 / L1) (Acholeplasma florum).